Here is a 331-residue protein sequence, read N- to C-terminus: Ketol-acid reductoisomerase (NADP(+)) (331 aa).

One can recognise a KARI N-terminal Rossmann domain in the interval 2–182; the sequence is AKLFYDSDAD…GGTRAGILET (181 aa). NADP(+) is bound by residues 25 to 28, serine 51, serine 53, and 83 to 86; these read YGSQ and DEFQ. The active site involves histidine 108. Glycine 134 contributes to the NADP(+) binding site. The KARI C-terminal knotted domain maps to 183–328; sequence NFKEETETDL…KTLRSMFSWL (146 aa). Aspartate 191, glutamate 195, glutamate 227, and glutamate 231 together coordinate Mg(2+). A substrate-binding site is contributed by serine 252.

The protein belongs to the ketol-acid reductoisomerase family. Mg(2+) is required as a cofactor.

It carries out the reaction (2R)-2,3-dihydroxy-3-methylbutanoate + NADP(+) = (2S)-2-acetolactate + NADPH + H(+). The catalysed reaction is (2R,3R)-2,3-dihydroxy-3-methylpentanoate + NADP(+) = (S)-2-ethyl-2-hydroxy-3-oxobutanoate + NADPH + H(+). It participates in amino-acid biosynthesis; L-isoleucine biosynthesis; L-isoleucine from 2-oxobutanoate: step 2/4. Its pathway is amino-acid biosynthesis; L-valine biosynthesis; L-valine from pyruvate: step 2/4. In terms of biological role, involved in the biosynthesis of branched-chain amino acids (BCAA). Catalyzes an alkyl-migration followed by a ketol-acid reduction of (S)-2-acetolactate (S2AL) to yield (R)-2,3-dihydroxy-isovalerate. In the isomerase reaction, S2AL is rearranged via a Mg-dependent methyl migration to produce 3-hydroxy-3-methyl-2-ketobutyrate (HMKB). In the reductase reaction, this 2-ketoacid undergoes a metal-dependent reduction by NADPH to yield (R)-2,3-dihydroxy-isovalerate. The protein is Ketol-acid reductoisomerase (NADP(+)) of Prochlorococcus marinus (strain NATL2A).